Reading from the N-terminus, the 568-residue chain is DNA ligase (568 aa).

Glu-249 serves as a coordination point for ATP. Residue Lys-251 is the N6-AMP-lysine intermediate of the active site. Residues Arg-256, Arg-271, Glu-301, Phe-342, Arg-418, and Lys-424 each coordinate ATP.

The protein belongs to the ATP-dependent DNA ligase family. Mg(2+) is required as a cofactor.

The enzyme catalyses ATP + (deoxyribonucleotide)n-3'-hydroxyl + 5'-phospho-(deoxyribonucleotide)m = (deoxyribonucleotide)n+m + AMP + diphosphate.. DNA ligase that seals nicks in double-stranded DNA during DNA replication, DNA recombination and DNA repair. This Methanocella arvoryzae (strain DSM 22066 / NBRC 105507 / MRE50) protein is DNA ligase.